A 469-amino-acid chain; its full sequence is 3-isopropylmalate dehydratase large subunit (469 aa).

[4Fe-4S] cluster-binding residues include Cys347, Cys410, and Cys413.

It belongs to the aconitase/IPM isomerase family. LeuC type 1 subfamily. As to quaternary structure, heterodimer of LeuC and LeuD. It depends on [4Fe-4S] cluster as a cofactor.

The enzyme catalyses (2R,3S)-3-isopropylmalate = (2S)-2-isopropylmalate. It functions in the pathway amino-acid biosynthesis; L-leucine biosynthesis; L-leucine from 3-methyl-2-oxobutanoate: step 2/4. In terms of biological role, catalyzes the isomerization between 2-isopropylmalate and 3-isopropylmalate, via the formation of 2-isopropylmaleate. In Burkholderia thailandensis (strain ATCC 700388 / DSM 13276 / CCUG 48851 / CIP 106301 / E264), this protein is 3-isopropylmalate dehydratase large subunit.